The primary structure comprises 149 residues: 3-dehydroquinate dehydratase (149 aa).

The active-site Proton acceptor is Y25. Residues N76, H82, and D89 each contribute to the substrate site. Residue H102 is the Proton donor of the active site. Residues 103-104 and R113 contribute to the substrate site; that span reads LS.

This sequence belongs to the type-II 3-dehydroquinase family. In terms of assembly, homododecamer.

It carries out the reaction 3-dehydroquinate = 3-dehydroshikimate + H2O. It functions in the pathway metabolic intermediate biosynthesis; chorismate biosynthesis; chorismate from D-erythrose 4-phosphate and phosphoenolpyruvate: step 3/7. In terms of biological role, catalyzes a trans-dehydration via an enolate intermediate. The sequence is that of 3-dehydroquinate dehydratase from Acaryochloris marina (strain MBIC 11017).